Consider the following 157-residue polypeptide: SsrA-binding protein (157 aa).

This sequence belongs to the SmpB family.

Its subcellular location is the cytoplasm. Required for rescue of stalled ribosomes mediated by trans-translation. Binds to transfer-messenger RNA (tmRNA), required for stable association of tmRNA with ribosomes. tmRNA and SmpB together mimic tRNA shape, replacing the anticodon stem-loop with SmpB. tmRNA is encoded by the ssrA gene; the 2 termini fold to resemble tRNA(Ala) and it encodes a 'tag peptide', a short internal open reading frame. During trans-translation Ala-aminoacylated tmRNA acts like a tRNA, entering the A-site of stalled ribosomes, displacing the stalled mRNA. The ribosome then switches to translate the ORF on the tmRNA; the nascent peptide is terminated with the 'tag peptide' encoded by the tmRNA and targeted for degradation. The ribosome is freed to recommence translation, which seems to be the essential function of trans-translation. The protein is SsrA-binding protein of Chlorobaculum tepidum (strain ATCC 49652 / DSM 12025 / NBRC 103806 / TLS) (Chlorobium tepidum).